We begin with the raw amino-acid sequence, 74 residues long: uncharacterized protein (74 aa).

The signal sequence occupies residues 1-19 (MIGLIVVPILFAIKGIVVG). Positions 26 to 74 (KFGKHSNTKDQKEDKDEDKRQSISQRKQHTEWPIEENRIQRRAPNQSAL) are disordered. Basic and acidic residues-rich tracts occupy residues 32–46 (NTKD…DKRQ) and 53–64 (QHTEWPIEENRI).

This is an uncharacterized protein from Saccharomyces cerevisiae (strain ATCC 204508 / S288c) (Baker's yeast).